A 473-amino-acid polypeptide reads, in one-letter code: UDP-N-acetylmuramate--L-alanine ligase (473 aa).

119-125 (GTHGKTT) contributes to the ATP binding site.

The protein belongs to the MurCDEF family.

It is found in the cytoplasm. It carries out the reaction UDP-N-acetyl-alpha-D-muramate + L-alanine + ATP = UDP-N-acetyl-alpha-D-muramoyl-L-alanine + ADP + phosphate + H(+). It participates in cell wall biogenesis; peptidoglycan biosynthesis. Functionally, cell wall formation. This is UDP-N-acetylmuramate--L-alanine ligase from Caulobacter vibrioides (strain NA1000 / CB15N) (Caulobacter crescentus).